We begin with the raw amino-acid sequence, 575 residues long: Electron transfer flavoprotein-ubiquinone oxidoreductase, mitochondrial (575 aa).

The transit peptide at 1 to 33 (MQRVLRAAAAGIGHASGHRAPRWGAAAAAARWL) directs the protein to the mitochondrion. Residue 44 to 58 (VVVVGAGPAGLAAAI) coordinates FAD. Residues 82–103 (VGAHVLSGNVFEPRALDELIPK) lie within the membrane without spanning it. 2 residues coordinate a ubiquinone: Gly-276 and Gly-277. An intramembrane segment occupies 343-363 (IPNPVFPGGAIIGCSAGFLNV). Cys-520, Cys-544, Cys-547, and Cys-550 together coordinate [4Fe-4S] cluster. A 4Fe-4S ferredoxin-type domain is found at 535 to 564 (QKLHINAQNCLHCKACDIKDPKQNIEWTVP).

It belongs to the ETF-QO/FixC family. [4Fe-4S] cluster is required as a cofactor. Requires FAD as cofactor.

It is found in the mitochondrion inner membrane. It catalyses the reaction a ubiquinone + reduced [electron-transfer flavoprotein] = a ubiquinol + oxidized [electron-transfer flavoprotein] + H(+). Its function is as follows. Accepts electrons from ETF and reduces ubiquinone. The sequence is that of Electron transfer flavoprotein-ubiquinone oxidoreductase, mitochondrial from Oryza sativa subsp. japonica (Rice).